We begin with the raw amino-acid sequence, 159 residues long: Urease subunit beta 2 (159 aa).

Residues 1–24 (MAKEPTKAAHPQPEQTKTNHKAHR) are disordered.

It belongs to the urease beta subunit family. Heterotrimer of UreA (gamma), UreB (beta) and UreC (alpha) subunits. Three heterotrimers associate to form the active enzyme.

It is found in the cytoplasm. It catalyses the reaction urea + 2 H2O + H(+) = hydrogencarbonate + 2 NH4(+). The protein operates within nitrogen metabolism; urea degradation; CO(2) and NH(3) from urea (urease route): step 1/1. Its function is as follows. Disrupting the ure2 operon has no effect on urease activity, or pathogen survival in BALB/c mice when inoculated by gavage, but confers slightly enhanced resistance to low pH killing in vitro. This chain is Urease subunit beta 2, found in Brucella suis biovar 1 (strain 1330).